Consider the following 341-residue polypeptide: HTH-type transcriptional repressor PurR (341 aa).

In terms of domain architecture, HTH lacI-type spans 2–56 (ATIKDVAKRAGVSTTTVSHVINKTRFVAEETKAAVGAAIKELHYSPSAVARSLKV). Positions 4-23 (IKDVAKRAGVSTTTVSHVIN) form a DNA-binding region, H-T-H motif. The DNA-binding element occupies 48–56 (SAVARSLKV). Hypoxanthine contacts are provided by Y73, R190, T192, F221, and D275.

As to quaternary structure, homodimer.

It participates in purine metabolism; purine nucleotide biosynthesis [regulation]. Is the main repressor of the genes involved in the de novo synthesis of purine nucleotides, regulating purB, purC, purEK, purF, purHD, purL, purMN and guaBA expression. PurR is allosterically activated to bind its cognate DNA by binding the purine corepressors, hypoxanthine or guanine, thereby effecting transcription repression. This Serratia proteamaculans (strain 568) protein is HTH-type transcriptional repressor PurR.